Consider the following 289-residue polypeptide: Putative transmembrane protein ORF289 (289 aa).

At 1–152 (MAIAKEFLLT…QYTSVVTFRT (152 aa)) the chain is on the extracellular side. Residues 153 to 173 (LVAPILYFFALFLVPAWSTVL) traverse the membrane as a helical segment. Over 174-234 (KQNPTFPQSQ…NGEVTSTQVN (61 aa)) the chain is Cytoplasmic. Residues 235-255 (APIFIGVTTPSGVLVLAYNYY) form a helical membrane-spanning segment. The Extracellular portion of the chain corresponds to 256–289 (SGTISKYVSLTVTTTYGSATVINQFETKTTGGTT).

It localises to the host membrane. The sequence is that of Putative transmembrane protein ORF289 from Acidianus sp. F28 (AFV-2).